Reading from the N-terminus, the 159-residue chain is Urease accessory protein UreE (159 aa).

It belongs to the UreE family.

The protein localises to the cytoplasm. Involved in urease metallocenter assembly. Binds nickel. Probably functions as a nickel donor during metallocenter assembly. The polypeptide is Urease accessory protein UreE (Pseudomonas entomophila (strain L48)).